A 368-amino-acid polypeptide reads, in one-letter code: D-alanine--D-alanine ligase (368 aa).

The ATP-grasp domain maps to 141–350; it reads KMIWDYSGLP…YNELIMHLIE (210 aa). 176-231 serves as a coordination point for ATP; the sequence is EKDLEYPLFIKPCRAGSSVGAGMVKNRNELLEQAEESFLWDNKILVEACIEAREVE. Mg(2+)-binding residues include Asp303, Glu317, and Asn319.

Belongs to the D-alanine--D-alanine ligase family. It depends on Mg(2+) as a cofactor. Mn(2+) serves as cofactor.

The protein resides in the cytoplasm. It catalyses the reaction 2 D-alanine + ATP = D-alanyl-D-alanine + ADP + phosphate + H(+). The protein operates within cell wall biogenesis; peptidoglycan biosynthesis. Cell wall formation. This Treponema denticola (strain ATCC 35405 / DSM 14222 / CIP 103919 / JCM 8153 / KCTC 15104) protein is D-alanine--D-alanine ligase.